Reading from the N-terminus, the 298-residue chain is Acetylglutamate kinase (298 aa).

Residues 69–70 (GG), Arg91, and Asn196 contribute to the substrate site.

Belongs to the acetylglutamate kinase family. ArgB subfamily.

The protein resides in the cytoplasm. The catalysed reaction is N-acetyl-L-glutamate + ATP = N-acetyl-L-glutamyl 5-phosphate + ADP. It functions in the pathway amino-acid biosynthesis; L-arginine biosynthesis; N(2)-acetyl-L-ornithine from L-glutamate: step 2/4. Functionally, catalyzes the ATP-dependent phosphorylation of N-acetyl-L-glutamate. The protein is Acetylglutamate kinase of Bradyrhizobium sp. (strain BTAi1 / ATCC BAA-1182).